The primary structure comprises 658 residues: CXXC-type zinc finger protein 1 (658 aa).

The residue at position 1 (Met1) is an N-acetylmethionine. Residues 1-14 show a composition bias toward acidic residues; the sequence is MEGDASDPEPPDAG. The disordered stretch occupies residues 1–20; it reads MEGDASDPEPPDAGEDSKSE. Phosphoserine is present on residues Ser6 and Ser19. Residues 28-76 form a PHD-type zinc finger; it reads YCICRKPDINCFMIGCDNCNEWFHGDCIRITEKMAKAIREWYCRECREK. The tract at residues 84-164 is disordered; sequence YRHKKSRERD…HQQQQQQQQI (81 aa). Over residues 90 to 120 the composition is skewed to basic and acidic residues; the sequence is RERDSSERDGSEPRDEGGGRKRPAPDPDLQR. The span at 153–163 shows a compositional bias: low complexity; it reads QHHQQQQQQQQ. A CXXC-type zinc finger spans residues 162–211; it reads QQIKRSARMCGECEACRRTEDCGHCDFCRDMKKFGGPNKIRQKCRLRQCQ. Cys171, Cys174, Cys177, Cys183, Cys186, Cys189, Cys205, and Cys210 together coordinate Zn(2+). Disordered regions lie at residues 221-285 and 327-373; these read FPSS…SDED and VKVK…DPAS. Phosphoserine is present on Ser226. Thr229 carries the phosphothreonine modification. Lys252 is covalently cross-linked (Glycyl lysine isopeptide (Lys-Gly) (interchain with G-Cter in SUMO2)). Residues 327–336 show a composition bias toward basic residues; the sequence is VKVKHVKRRE. Basic and acidic residues predominate over residues 337-347; that stretch reads KKSEKKKDERY. Residues 348–360 show a composition bias toward basic residues; it reads KRHRQKQKHKDKW. Positions 361–370 are enriched in basic and acidic residues; the sequence is KHPERADAKD. Positions 428 to 470 form a coiled coil; that stretch reads GKKLLERIRREQQSARTRLQEMERRFHELEAIILRAKQQAVRE.

Component of the SET1 complex, at least composed of the catalytic subunit (SETD1A or SETD1B), WDR5, WDR82, RBBP5, ASH2L/ASH2, CXXC1/CFP1, HCFC1 and DPY30. Interacts with SETD1A. Interacts with ZNF335. Interacts with PRDM9; this interaction does not link PRDM9-activated recombination hotspot sites with DSB machinery and is not required for the hotspot recognition pathway. Interacts with histone H3K4me3. Post-translationally, may be regulated by proteolysis.

The protein resides in the nucleus speckle. Its subcellular location is the nucleus. In terms of biological role, transcriptional activator that exhibits a unique DNA binding specificity for CpG unmethylated motifs with a preference for CpGG. This Bos taurus (Bovine) protein is CXXC-type zinc finger protein 1 (CXXC1).